A 196-amino-acid chain; its full sequence is Putative 3-methyladenine DNA glycosylase (196 aa).

The protein belongs to the DNA glycosylase MPG family.

This chain is Putative 3-methyladenine DNA glycosylase, found in Chlorobium phaeovibrioides (strain DSM 265 / 1930) (Prosthecochloris vibrioformis (strain DSM 265)).